We begin with the raw amino-acid sequence, 660 residues long: Bifunctional polymyxin resistance protein ArnA (660 aa).

The tract at residues 1 to 304 is formyltransferase ArnAFT; sequence MKTVVFAYHD…TLGLVQGSRL (304 aa). 86–88 is a binding site for (6R)-10-formyltetrahydrofolate; that stretch reads HLI. Residue histidine 104 is the Proton donor; for formyltransferase activity of the active site. Residues arginine 114 and 136-140 contribute to the (6R)-10-formyltetrahydrofolate site; that span reads VKRAD. Residues 314–660 are dehydrogenase ArnADH; sequence RRTRVLILGV…RTVDLTDKPS (347 aa). NAD(+)-binding positions include aspartate 347 and 368-369; that span reads DI. Residues alanine 393, tyrosine 398, and 432–433 each bind UDP-alpha-D-glucuronate; that span reads TS. Glutamate 434 acts as the Proton acceptor; for decarboxylase activity in catalysis. UDP-alpha-D-glucuronate contacts are provided by residues arginine 460, asparagine 492, 526 to 535, and tyrosine 613; that span reads KLIDGGKQKR. Arginine 619 (proton donor; for decarboxylase activity) is an active-site residue.

In the N-terminal section; belongs to the Fmt family. UDP-L-Ara4N formyltransferase subfamily. This sequence in the C-terminal section; belongs to the NAD(P)-dependent epimerase/dehydratase family. UDP-glucuronic acid decarboxylase subfamily. Homohexamer, formed by a dimer of trimers.

The enzyme catalyses UDP-alpha-D-glucuronate + NAD(+) = UDP-beta-L-threo-pentopyranos-4-ulose + CO2 + NADH. It catalyses the reaction UDP-4-amino-4-deoxy-beta-L-arabinose + (6R)-10-formyltetrahydrofolate = UDP-4-deoxy-4-formamido-beta-L-arabinose + (6S)-5,6,7,8-tetrahydrofolate + H(+). It participates in nucleotide-sugar biosynthesis; UDP-4-deoxy-4-formamido-beta-L-arabinose biosynthesis; UDP-4-deoxy-4-formamido-beta-L-arabinose from UDP-alpha-D-glucuronate: step 1/3. Its pathway is nucleotide-sugar biosynthesis; UDP-4-deoxy-4-formamido-beta-L-arabinose biosynthesis; UDP-4-deoxy-4-formamido-beta-L-arabinose from UDP-alpha-D-glucuronate: step 3/3. The protein operates within bacterial outer membrane biogenesis; lipopolysaccharide biosynthesis. In terms of biological role, bifunctional enzyme that catalyzes the oxidative decarboxylation of UDP-glucuronic acid (UDP-GlcUA) to UDP-4-keto-arabinose (UDP-Ara4O) and the addition of a formyl group to UDP-4-amino-4-deoxy-L-arabinose (UDP-L-Ara4N) to form UDP-L-4-formamido-arabinose (UDP-L-Ara4FN). The modified arabinose is attached to lipid A and is required for resistance to polymyxin and cationic antimicrobial peptides. This is Bifunctional polymyxin resistance protein ArnA from Escherichia coli O81 (strain ED1a).